Consider the following 172-residue polypeptide: Cytochrome b6-f complex iron-sulfur subunit (172 aa).

Residues 19–39 (LNALLSGSVGVVVVGALYPVV) form a helical membrane-spanning segment. The 101-residue stretch at 61–161 (GKPISVSELL…ATVDGDNVRF (101 aa)) folds into the Rieske domain. [2Fe-2S] cluster-binding residues include C107, H109, C125, and H128. Cysteines 112 and 127 form a disulfide.

The protein belongs to the Rieske iron-sulfur protein family. As to quaternary structure, the 4 large subunits of the cytochrome b6-f complex are cytochrome b6, subunit IV (17 kDa polypeptide, PetD), cytochrome f and the Rieske protein, while the 4 small subunits are PetG, PetL, PetM and PetN. The complex functions as a dimer. Requires [2Fe-2S] cluster as cofactor.

It localises to the cellular thylakoid membrane. It catalyses the reaction 2 oxidized [plastocyanin] + a plastoquinol + 2 H(+)(in) = 2 reduced [plastocyanin] + a plastoquinone + 4 H(+)(out). Functionally, component of the cytochrome b6-f complex, which mediates electron transfer between photosystem II (PSII) and photosystem I (PSI), cyclic electron flow around PSI, and state transitions. The chain is Cytochrome b6-f complex iron-sulfur subunit from Synechococcus sp. (strain JA-2-3B'a(2-13)) (Cyanobacteria bacterium Yellowstone B-Prime).